Consider the following 435-residue polypeptide: Asparagine--tRNA ligase (435 aa).

This sequence belongs to the class-II aminoacyl-tRNA synthetase family. In terms of assembly, homodimer.

The protein resides in the cytoplasm. It carries out the reaction tRNA(Asn) + L-asparagine + ATP = L-asparaginyl-tRNA(Asn) + AMP + diphosphate + H(+). The chain is Asparagine--tRNA ligase from Leptospira interrogans serogroup Icterohaemorrhagiae serovar Lai (strain 56601).